A 758-amino-acid polypeptide reads, in one-letter code: 5-methyltetrahydropteroyltriglutamate--homocysteine methyltransferase (758 aa).

5-methyltetrahydropteroyltri-L-glutamate-binding positions include 16 to 19 (RELK) and K112. L-homocysteine-binding positions include 433-435 (IGS) and E486. L-methionine is bound by residues 433–435 (IGS) and E486. Residues 517 to 518 (RC) and W563 contribute to the 5-methyltetrahydropteroyltri-L-glutamate site. D601 is a binding site for L-homocysteine. L-methionine is bound at residue D601. A 5-methyltetrahydropteroyltri-L-glutamate-binding site is contributed by E607. Zn(2+)-binding residues include H643, C645, and E667. H696 acts as the Proton donor in catalysis. A Zn(2+)-binding site is contributed by C728.

It belongs to the vitamin-B12 independent methionine synthase family. Zn(2+) serves as cofactor.

It carries out the reaction 5-methyltetrahydropteroyltri-L-glutamate + L-homocysteine = tetrahydropteroyltri-L-glutamate + L-methionine. The protein operates within amino-acid biosynthesis; L-methionine biosynthesis via de novo pathway; L-methionine from L-homocysteine (MetE route): step 1/1. Its function is as follows. Catalyzes the transfer of a methyl group from 5-methyltetrahydrofolate to homocysteine resulting in methionine formation. The protein is 5-methyltetrahydropteroyltriglutamate--homocysteine methyltransferase of Neisseria gonorrhoeae (strain ATCC 700825 / FA 1090).